A 36-amino-acid chain; its full sequence is Pancreatic polypeptide (36 aa).

Residue Y36 is modified to Tyrosine amide.

The protein belongs to the NPY family.

It localises to the secreted. Its function is as follows. Hormone secreted by pancreatic cells that acts as a regulator of pancreatic and gastrointestinal functions. The chain is Pancreatic polypeptide (PPY) from Struthio camelus (Common ostrich).